The primary structure comprises 217 residues: MVFSSAKREKNNMLAVNNLCIERNGRAIIQDLSFTLEGQKRLFVQGEIGSGKTTLLLALLGFVPVTKGEIKLFGKVCRKEKDFAPFRGTIGICFQNADDQLFGPTVLDDIAFGPLNQNVPREQAYHIAEQQLERLGITRLKDRMVHTLSGGEKNFTALAGVLAMQPKILLLDEPTNGLDRKNTEKLTALLRELSLPILISSHHHGFINELATEIISL.

The region spanning 14-217 (LAVNNLCIER…NELATEIISL (204 aa)) is the ABC transporter domain. Residue 46 to 53 (GEIGSGKT) participates in ATP binding.

This sequence belongs to the ABC transporter superfamily.

This is an uncharacterized protein from Haemophilus influenzae (strain ATCC 51907 / DSM 11121 / KW20 / Rd).